Here is a 474-residue protein sequence, read N- to C-terminus: MNKNKNIGIILAGGVGSRMGLGYPKQFSKIAGKTALEHTLAIFQEHKEIDEIIIVSERTSYRRIEDIVSKLDFSKVNRIIFGGKERSDSTLSAITALQDEPENTKLIIHDAVRPLLATEIISECIAKLDKYNAVDVAIPAVDTIVHVNNDTQEIIKIPKRAEYYQGQTPQAFKLGTLKKAYDIYTQGGIEGTCDCSIVLKTLPEERVGIVSGSETNIKLTRPVDLFIADKLFQSRSHFSLRNITSIDRLYDMKDQVLVVIGGSYGIGAHIIDIAKKFGIKTYSLSRSNGVDVGDVKSIEKAFAEIYAKEHKIDHIVNTAAVLNHKTLVSMSYEEILTSINVNYTGMINAVITAYPYLKQTHGSFLGFTSSSYTRGRPFYAIYSSAKAAVVNLTQAISEEWLPDNIKINCVNPERTKTPMRTKAFGIEPEGTLLDAKTVAFASLVVLASRETGNIIDVVLKDEEYITNILADLYK.

The interval 1–238 is ribitol-5-phosphate cytidylyltransferase; that stretch reads MNKNKNIGII…DKLFQSRSHF (238 aa). The interval 250–474 is ribulose-5-phosphate reductase; the sequence is YDMKDQVLVV…ITNILADLYK (225 aa).

The protein in the N-terminal section; belongs to the IspD/TarI cytidylyltransferase family. This sequence in the C-terminal section; belongs to the short-chain dehydrogenases/reductases (SDR) family. Monomer.

It catalyses the reaction D-ribitol 5-phosphate + CTP + H(+) = CDP-L-ribitol + diphosphate. The catalysed reaction is D-ribitol 5-phosphate + NADP(+) = D-ribulose 5-phosphate + NADPH + H(+). Its pathway is capsule biogenesis; capsule polysaccharide biosynthesis. Functionally, catalyzes the NADPH-dependent reduction of D-ribulose 5-phosphate to D-ribitol 5-phosphate and the further reaction of D-ribitol 5-phosphate with CTP to form CDP-ribitol. In Haemophilus influenzae, this protein is Bifunctional ribulose 5-phosphate reductase/CDP-ribitol pyrophosphorylase Bcs1.